We begin with the raw amino-acid sequence, 337 residues long: Ribosomal RNA small subunit methyltransferase C (337 aa).

It belongs to the methyltransferase superfamily. RsmC family. As to quaternary structure, monomer.

Its subcellular location is the cytoplasm. It catalyses the reaction guanosine(1207) in 16S rRNA + S-adenosyl-L-methionine = N(2)-methylguanosine(1207) in 16S rRNA + S-adenosyl-L-homocysteine + H(+). Functionally, specifically methylates the guanine in position 1207 of 16S rRNA in the 30S particle. This Acinetobacter baumannii (strain ACICU) protein is Ribosomal RNA small subunit methyltransferase C.